We begin with the raw amino-acid sequence, 380 residues long: uncharacterized protein (380 aa).

The segment at 251-275 (NMSERPPTPSHDTASSSTSTDPNPL) is disordered. Residues 260 to 272 (SHDTASSSTSTDP) are compositionally biased toward low complexity.

This is an uncharacterized protein from Allium cepa var. aggregatum (Shallot).